The sequence spans 425 residues: Multifunctional CCA protein (425 aa).

ATP-binding residues include Gly8 and Arg11. Residues Gly8 and Arg11 each coordinate CTP. Mg(2+) contacts are provided by Glu21 and Asp23. 3 residues coordinate ATP: Arg91, Arg137, and Arg140. Positions 91, 137, and 140 each coordinate CTP. Residues 228 to 329 (TGVHTLMVLD…VDLLDRLGAL (102 aa)) form the HD domain.

This sequence belongs to the tRNA nucleotidyltransferase/poly(A) polymerase family. Bacterial CCA-adding enzyme type 1 subfamily. In terms of assembly, monomer. Can also form homodimers and oligomers. Mg(2+) serves as cofactor. Ni(2+) is required as a cofactor.

It catalyses the reaction a tRNA precursor + 2 CTP + ATP = a tRNA with a 3' CCA end + 3 diphosphate. The catalysed reaction is a tRNA with a 3' CCA end + 2 CTP + ATP = a tRNA with a 3' CCACCA end + 3 diphosphate. Its function is as follows. Catalyzes the addition and repair of the essential 3'-terminal CCA sequence in tRNAs without using a nucleic acid template. Adds these three nucleotides in the order of C, C, and A to the tRNA nucleotide-73, using CTP and ATP as substrates and producing inorganic pyrophosphate. tRNA 3'-terminal CCA addition is required both for tRNA processing and repair. Also involved in tRNA surveillance by mediating tandem CCA addition to generate a CCACCA at the 3' terminus of unstable tRNAs. While stable tRNAs receive only 3'-terminal CCA, unstable tRNAs are marked with CCACCA and rapidly degraded. The chain is Multifunctional CCA protein from Methylococcus capsulatus (strain ATCC 33009 / NCIMB 11132 / Bath).